Here is a 272-residue protein sequence, read N- to C-terminus: Cell division protein DivIB (272 aa).

The Cytoplasmic portion of the chain corresponds to 1 to 21 (MRLSSHGKKTVSTSNNPVFNR). Residues 22 to 42 (IGLFFTAAILFALFLQMLFFL) traverse the membrane as a helical segment. Residues 43 to 115 (RPWQDIKETK…GTAIIRVNEN (73 aa)) form the POTRA domain. Residues 43–272 (RPWQDIKETK…SSSKSSNSSK (230 aa)) are Extracellular-facing. The tract at residues 253–272 (LSSLSSDKSKSSSKSSNSSK) is disordered.

Belongs to the FtsQ/DivIB family. DivIB subfamily.

The protein resides in the cell membrane. Cell division protein that may be involved in stabilizing or promoting the assembly of the division complex. In Oenococcus oeni (strain ATCC BAA-331 / PSU-1), this protein is Cell division protein DivIB.